We begin with the raw amino-acid sequence, 715 residues long: 1,4-alpha-glucan branching enzyme GlgB (715 aa).

Residue aspartate 399 is the Nucleophile of the active site. The active-site Proton donor is glutamate 452.

It belongs to the glycosyl hydrolase 13 family. GlgB subfamily. Monomer.

The enzyme catalyses Transfers a segment of a (1-&gt;4)-alpha-D-glucan chain to a primary hydroxy group in a similar glucan chain.. Its pathway is glycan biosynthesis; glycogen biosynthesis. Functionally, catalyzes the formation of the alpha-1,6-glucosidic linkages in glycogen by scission of a 1,4-alpha-linked oligosaccharide from growing alpha-1,4-glucan chains and the subsequent attachment of the oligosaccharide to the alpha-1,6 position. The sequence is that of 1,4-alpha-glucan branching enzyme GlgB from Rhodopseudomonas palustris (strain BisA53).